The following is a 518-amino-acid chain: Ent-cassadiene hydroxylase (518 aa).

The chain crosses the membrane as a helical span at residues 6-26 (LILALGLSVLFVLLSKLVSSA). Cysteine 451 is a heme binding site.

Belongs to the cytochrome P450 family. Heme serves as cofactor.

Its subcellular location is the membrane. The enzyme catalyses ent-cassa-12,15-diene + 3 reduced [NADPH--hemoprotein reductase] + 3 O2 = ent-3beta-hydroxycassa-12,15-dien-2-one + 3 oxidized [NADPH--hemoprotein reductase] + 4 H2O + 3 H(+). Its function is as follows. Enzyme of the diterpenoid metabolism involved in the biosynthesis of antibacterial oryzalides such as phytocassane. Catalyzes the hydroxylation of ent-cassa-12,15-diene to form ent-3beta-hydroxycassa-12,15-dien-2-one. The polypeptide is Ent-cassadiene hydroxylase (CYP71Z7) (Oryza sativa subsp. japonica (Rice)).